The chain runs to 339 residues: DNA-directed RNA polymerase subunit alpha (339 aa).

The tract at residues 1-237 (MENELMYMNW…EQMNVFINFD (237 aa)) is alpha N-terminal domain (alpha-NTD). The segment at 256–339 (FNENLYRSVN…PPAEDNKEGE (84 aa)) is alpha C-terminal domain (alpha-CTD).

The protein belongs to the RNA polymerase alpha chain family. As to quaternary structure, homodimer. The RNAP catalytic core consists of 2 alpha, 1 beta, 1 beta' and 1 omega subunit. When a sigma factor is associated with the core the holoenzyme is formed, which can initiate transcription.

It carries out the reaction RNA(n) + a ribonucleoside 5'-triphosphate = RNA(n+1) + diphosphate. Its function is as follows. DNA-dependent RNA polymerase catalyzes the transcription of DNA into RNA using the four ribonucleoside triphosphates as substrates. The polypeptide is DNA-directed RNA polymerase subunit alpha (Desulfosudis oleivorans (strain DSM 6200 / JCM 39069 / Hxd3) (Desulfococcus oleovorans)).